The following is an 85-amino-acid chain: uncharacterized protein (85 aa).

This is an uncharacterized protein from Lactococcus phage mv4 (Lactococcus delbrueckii bacteriophage mv4).